Consider the following 37-residue polypeptide: Large ribosomal subunit protein bL36 (37 aa).

Belongs to the bacterial ribosomal protein bL36 family.

The sequence is that of Large ribosomal subunit protein bL36 from Leptospira biflexa serovar Patoc (strain Patoc 1 / Ames).